A 167-amino-acid polypeptide reads, in one-letter code: Glutathione peroxidase-like peroxiredoxin 1 (167 aa).

The active-site Cysteine sulfenic acid (-SOH) intermediate is Cys-36. Cys-36 and Cys-82 are disulfide-bonded.

It belongs to the glutathione peroxidase family. In terms of assembly, monomer.

It localises to the peroxisome matrix. Its subcellular location is the mitochondrion outer membrane. It carries out the reaction 2 glutathione + H2O2 = glutathione disulfide + 2 H2O. The catalysed reaction is a hydroperoxide + [thioredoxin]-dithiol = an alcohol + [thioredoxin]-disulfide + H2O. Glutathione peroxidase-like protein that protects cells from phospholipid hydroperoxides and nonphospholipid peroxides during oxidative stress. Has peroxidase activity using thioredoxin or glutathione as a reducing power. Involved in peroxisome formation. The protein is Glutathione peroxidase-like peroxiredoxin 1 of Saccharomyces cerevisiae (strain ATCC 204508 / S288c) (Baker's yeast).